The chain runs to 307 residues: N-acetylmuramic acid 6-phosphate etherase (307 aa).

The SIS domain occupies 60–223 (AAQAIARGGR…STGAMVRIGK (164 aa)). Glutamate 88 (proton donor) is an active-site residue. Residue glutamate 119 is part of the active site.

The protein belongs to the GCKR-like family. MurNAc-6-P etherase subfamily. Homodimer.

The catalysed reaction is N-acetyl-D-muramate 6-phosphate + H2O = N-acetyl-D-glucosamine 6-phosphate + (R)-lactate. It functions in the pathway amino-sugar metabolism; N-acetylmuramate degradation. Specifically catalyzes the cleavage of the D-lactyl ether substituent of MurNAc 6-phosphate, producing GlcNAc 6-phosphate and D-lactate. In Synechococcus elongatus (strain ATCC 33912 / PCC 7942 / FACHB-805) (Anacystis nidulans R2), this protein is N-acetylmuramic acid 6-phosphate etherase.